The primary structure comprises 479 residues: Flotillin-like protein 3 (479 aa).

C36 is lipidated: S-palmitoyl cysteine. 2 coiled-coil regions span residues 227–251 (KVKT…AALA) and 306–326 (EYET…KQAE).

Belongs to the band 7/mec-2 family. Flotillin subfamily. In terms of processing, may be palmitoylated.

It localises to the cell membrane. Its subcellular location is the membrane. It is found in the caveola. Its function is as follows. May act as a scaffolding protein within caveolar membranes, functionally participating in formation of caveolae or caveolae-like vesicles. The sequence is that of Flotillin-like protein 3 (FLOT3) from Arabidopsis thaliana (Mouse-ear cress).